A 244-amino-acid polypeptide reads, in one-letter code: Phosphoadenosine 5'-phosphosulfate reductase (244 aa).

Catalysis depends on Cys-239, which acts as the Nucleophile; cysteine thiosulfonate intermediate.

The protein belongs to the PAPS reductase family. CysH subfamily.

It localises to the cytoplasm. It carries out the reaction [thioredoxin]-disulfide + sulfite + adenosine 3',5'-bisphosphate + 2 H(+) = [thioredoxin]-dithiol + 3'-phosphoadenylyl sulfate. Its pathway is sulfur metabolism; hydrogen sulfide biosynthesis; sulfite from sulfate: step 3/3. Functionally, catalyzes the formation of sulfite from phosphoadenosine 5'-phosphosulfate (PAPS) using thioredoxin as an electron donor. The sequence is that of Phosphoadenosine 5'-phosphosulfate reductase from Enterobacter sp. (strain 638).